The sequence spans 317 residues: Malate dehydrogenase (317 aa).

NAD(+) contacts are provided by residues 13–18 (GAGNIG) and aspartate 38. The substrate site is built by arginine 87 and arginine 93. NAD(+)-binding positions include asparagine 100 and 123–125 (VTN). Residues asparagine 125 and arginine 156 each coordinate substrate. Histidine 180 functions as the Proton acceptor in the catalytic mechanism.

Belongs to the LDH/MDH superfamily. MDH type 3 family.

The enzyme catalyses (S)-malate + NAD(+) = oxaloacetate + NADH + H(+). Functionally, catalyzes the reversible oxidation of malate to oxaloacetate. The protein is Malate dehydrogenase of Anaplasma marginale (strain St. Maries).